We begin with the raw amino-acid sequence, 345 residues long: Ferrochelatase (345 aa).

Fe cation contacts are provided by His215 and Glu296.

The protein belongs to the ferrochelatase family.

Its subcellular location is the cytoplasm. It carries out the reaction heme b + 2 H(+) = protoporphyrin IX + Fe(2+). It functions in the pathway porphyrin-containing compound metabolism; protoheme biosynthesis; protoheme from protoporphyrin-IX: step 1/1. In terms of biological role, catalyzes the ferrous insertion into protoporphyrin IX. The chain is Ferrochelatase from Nitrobacter hamburgensis (strain DSM 10229 / NCIMB 13809 / X14).